Here is a 327-residue protein sequence, read N- to C-terminus: Putative pumilio homolog 19 (327 aa).

The PUM-HD domain occupies Met1–Arg324. Pumilio repeat units follow at residues Ser79–Ala114, Ile115–Glu149, Arg150–Leu185, Glu186–Val222, Asn223–Gly260, and Cys261–Trp295.

The protein resides in the cytoplasm. Sequence-specific RNA-binding protein that regulates translation and mRNA stability by binding the 3'-UTR of target mRNAs. This chain is Putative pumilio homolog 19 (APUM19), found in Arabidopsis thaliana (Mouse-ear cress).